A 120-amino-acid polypeptide reads, in one-letter code: Aspartate 1-decarboxylase (120 aa).

Residue S25 is the Schiff-base intermediate with substrate; via pyruvic acid of the active site. Residue S25 is modified to Pyruvic acid (Ser). T57 is a substrate binding site. Y58 functions as the Proton donor in the catalytic mechanism. Residue 72-74 (GAA) participates in substrate binding.

This sequence belongs to the PanD family. As to quaternary structure, heterooctamer of four alpha and four beta subunits. Pyruvate serves as cofactor. In terms of processing, is synthesized initially as an inactive proenzyme, which is activated by self-cleavage at a specific serine bond to produce a beta-subunit with a hydroxyl group at its C-terminus and an alpha-subunit with a pyruvoyl group at its N-terminus.

The protein resides in the cytoplasm. The catalysed reaction is L-aspartate + H(+) = beta-alanine + CO2. It participates in cofactor biosynthesis; (R)-pantothenate biosynthesis; beta-alanine from L-aspartate: step 1/1. Functionally, catalyzes the pyruvoyl-dependent decarboxylation of aspartate to produce beta-alanine. The sequence is that of Aspartate 1-decarboxylase from Helicobacter hepaticus (strain ATCC 51449 / 3B1).